We begin with the raw amino-acid sequence, 558 residues long: Glucose-6-phosphate isomerase (558 aa).

The Proton donor role is filled by E362. Active-site residues include H393 and K523.

This sequence belongs to the GPI family.

The protein localises to the cytoplasm. The catalysed reaction is alpha-D-glucose 6-phosphate = beta-D-fructose 6-phosphate. It functions in the pathway carbohydrate degradation; glycolysis; D-glyceraldehyde 3-phosphate and glycerone phosphate from D-glucose: step 2/4. This Drosophila yakuba (Fruit fly) protein is Glucose-6-phosphate isomerase (Pgi).